The following is a 159-amino-acid chain: MQSKEDFIEMRVPASAEYVSLIRLTLSGVFSRAGATYDDIEDAKIAVSEAVTNAVKHAYKENNNVGIINIYFEILEDKIKIVISDKGDSFDYETTKSKIGPYDKNENIDFLREGGLGLFLIESLMDEVTVYKESGVTISMTKYIKKEQVRNNGERVEIS.

It belongs to the anti-sigma-factor family.

It catalyses the reaction L-seryl-[protein] + ATP = O-phospho-L-seryl-[protein] + ADP + H(+). It carries out the reaction L-threonyl-[protein] + ATP = O-phospho-L-threonyl-[protein] + ADP + H(+). Its function is as follows. Negative regulator of sigma-B activity. Phosphorylates and inactivates its specific antagonist protein, RsbV. Upon phosphorylation of RsbV, RsbW is released and binds to sigma-B, thereby blocking its ability to form an RNA polymerase holoenzyme (E-sigma-B). This is Serine-protein kinase RsbW from Staphylococcus aureus (strain MSSA476).